The primary structure comprises 406 residues: S-adenosylmethionine synthase (406 aa).

His17 contributes to the ATP binding site. Asp19 serves as a coordination point for Mg(2+). Glu45 provides a ligand contact to K(+). L-methionine is bound by residues Glu58 and Gln101. Residues 101-111 (QSAEINQGVAR) form a flexible loop region. Residues 178-180 (DGK), Asp258, 264-265 (RK), Ala281, and Lys285 each bind ATP. Asp258 contacts L-methionine. Lys289 is a binding site for L-methionine.

It belongs to the AdoMet synthase family. In terms of assembly, homotetramer; dimer of dimers. Requires Mg(2+) as cofactor. K(+) serves as cofactor.

It is found in the cytoplasm. The catalysed reaction is L-methionine + ATP + H2O = S-adenosyl-L-methionine + phosphate + diphosphate. It functions in the pathway amino-acid biosynthesis; S-adenosyl-L-methionine biosynthesis; S-adenosyl-L-methionine from L-methionine: step 1/1. Its function is as follows. Catalyzes the formation of S-adenosylmethionine (AdoMet) from methionine and ATP. The overall synthetic reaction is composed of two sequential steps, AdoMet formation and the subsequent tripolyphosphate hydrolysis which occurs prior to release of AdoMet from the enzyme. This chain is S-adenosylmethionine synthase, found in Bifidobacterium longum (strain NCC 2705).